The following is a 2238-amino-acid chain: Golgin subfamily A member 4 (2238 aa).

Positions 1–90 are disordered; the sequence is MFKKLKQKIS…QTFAQKLQLR (90 aa). S10 carries the phosphoserine modification. A compositionally biased stretch (low complexity) spans 12 to 41; that stretch reads EQQQLQQALAPAQASSSSSTPTRTRSRTSS. Phosphothreonine is present on T39. A Phosphoserine modification is found at S41. Polar residues-rich tracts occupy residues 52 to 62 and 73 to 85; these read NRENASTQATK and SPSQ…TFAQ. Phosphoserine occurs at positions 93 and 100. Disordered stretches follow at residues 132–154, 1695–1744, and 1770–1789; these read AAAF…NSDG, LKER…SQDC, and LEQG…HRAL. Positions 154–224 are interaction with MACF1; sequence GLSREQLLQR…EELQMDQQAK (71 aa). A coiled-coil region spans residues 156–2161; it reads SREQLLQRLR…RYEKNACAAT (2006 aa). Residues 1695 to 1711 show a composition bias toward basic and acidic residues; it reads LKEREKQVHSLEDKLKN. The GRIP domain occupies 2178 to 2225; that stretch reads LFGEPTEFEYLRKVMFEYMMGRETKTMAKVITTVLKFPDDQAQKILER.

As to quaternary structure, homodimer. Interacts with GTP-bound ARL1 and ARL3. Interacts with MACF1. Directly interacts with TBC1D23. Interacts with FAM91A1; this interaction may be mediated by TBC1D23. In terms of tissue distribution, ubiquitous. Highly expressed in oligodendrocyte precursors, particularly at a stage just prior to myelination.

The protein resides in the cytoplasm. Its subcellular location is the golgi apparatus membrane. The protein localises to the golgi apparatus. It localises to the trans-Golgi network membrane. Involved in vesicular trafficking at the Golgi apparatus level. May play a role in delivery of transport vesicles containing GPI-linked proteins from the trans-Golgi network through its interaction with MACF1. Involved in endosome-to-Golgi trafficking. The sequence is that of Golgin subfamily A member 4 (Golga4) from Mus musculus (Mouse).